Here is a 355-residue protein sequence, read N- to C-terminus: C-C chemokine receptor type 1 (355 aa).

Over Met-1 to Ala-34 the chain is Extracellular. Residues Gly-35–Met-60 form a helical membrane-spanning segment. The Cytoplasmic segment spans residues Gln-61 to Arg-64. The helical transmembrane segment at Leu-65–Ile-91 threads the bilayer. Residues Asp-92–Lys-107 are Extracellular-facing. The cysteines at positions 106 and 183 are disulfide-linked. The chain crosses the membrane as a helical span at residues Leu-108–Ile-129. The Cytoplasmic segment spans residues Asp-130–Thr-146. The helical transmembrane segment at Val-147 to Phe-171 threads the bilayer. The Extracellular portion of the chain corresponds to Phe-172–Arg-197. A helical membrane pass occupies residues Phe-198–Ile-223. Topologically, residues Arg-224–Arg-239 are cytoplasmic. The chain crosses the membrane as a helical span at residues Leu-240–Phe-264. Residues Gln-265–Leu-281 lie on the Extracellular side of the membrane. A helical transmembrane segment spans residues Ala-282–Gly-305. The Cytoplasmic portion of the chain corresponds to Glu-306–Phe-355.

The protein belongs to the G-protein coupled receptor 1 family. Interacts with CREB3. Interacts with CCL3. Interacts with CCL15. Interacts with CCL23. Interacts with GNAI1. Interacts with PF4/CXCL4. In terms of tissue distribution, detected in the heart, spleen, lung, peritoneal exudate cells and leukocytes.

Its subcellular location is the cell membrane. In terms of biological role, chemokine receptor that plays a crucial role in regulating immune cell migration, inflammation, and immune responses. Contributes to the inflammatory response by recruiting immune cells, such as monocytes, macrophages, T-cells, and dendritic cells, to sites of inflammation for the clearance of pathogens and the resolution of tissue damage. When activated by its ligands including CCL3, CCL5-9, CCL13-16 and CCL23, triggers a signaling cascade within immune cells, leading to their migration towards the source of the chemokine. For example, mediates neutrophil migration after activation by CCL3 leading to the sequential release of TNF-alpha and leukotriene B4. Also mediates monocyte migration upon CXCL4 binding. Activation by CCL5 results in neuroinflammation through the ERK1/2 signaling pathway. This Mus musculus (Mouse) protein is C-C chemokine receptor type 1 (Ccr1).